We begin with the raw amino-acid sequence, 121 residues long: Basic phospholipase A2 3 (121 aa).

Cystine bridges form between Cys26–Cys115, Cys28–Cys44, Cys43–Cys95, Cys49–Cys121, Cys50–Cys88, Cys57–Cys81, and Cys75–Cys86. The Ca(2+) site is built by Tyr27, Gly29, and Gly31. His47 is a catalytic residue. Asp48 lines the Ca(2+) pocket. Asp89 is an active-site residue.

The protein belongs to the phospholipase A2 family. Group II subfamily. D49 sub-subfamily. Ca(2+) serves as cofactor. Expressed by the venom gland.

Its subcellular location is the secreted. The enzyme catalyses a 1,2-diacyl-sn-glycero-3-phosphocholine + H2O = a 1-acyl-sn-glycero-3-phosphocholine + a fatty acid + H(+). In terms of biological role, PLA2 catalyzes the calcium-dependent hydrolysis of the 2-acyl groups in 3-sn-phosphoglycerides. The polypeptide is Basic phospholipase A2 3 (Daboia russelii (Russel's viper)).